Reading from the N-terminus, the 257-residue chain is Probable amino-acid ABC transporter ATP-binding protein HI_1078 (257 aa).

The region spanning 4–244 (LKVSNIQKNF…PQHERTKQFL (241 aa)) is the ABC transporter domain. 36–43 (GPSGSGKT) provides a ligand contact to ATP.

This sequence belongs to the ABC transporter superfamily.

It localises to the cell inner membrane. In terms of biological role, probably part of a binding-protein-dependent transport system for an amino acid. Probably responsible for energy coupling to the transport system. The protein is Probable amino-acid ABC transporter ATP-binding protein HI_1078 of Haemophilus influenzae (strain ATCC 51907 / DSM 11121 / KW20 / Rd).